The primary structure comprises 364 residues: D-alanine--D-alanine ligase A (364 aa).

Positions 145–348 constitute an ATP-grasp domain; it reads KRLLRDAGLN…YTDLITRLIE (204 aa). 175 to 230 contributes to the ATP binding site; it reads ESKLGLPLFVKPANQGSSVGVSKVTSEEQYTIAVDLAFEFDHKVIVEQGIKGREIE. Positions 302, 315, and 317 each coordinate Mg(2+).

The protein belongs to the D-alanine--D-alanine ligase family. Mg(2+) is required as a cofactor. Requires Mn(2+) as cofactor.

The protein resides in the cytoplasm. It carries out the reaction 2 D-alanine + ATP = D-alanyl-D-alanine + ADP + phosphate + H(+). It participates in cell wall biogenesis; peptidoglycan biosynthesis. Its function is as follows. Cell wall formation. This Escherichia coli O6:H1 (strain CFT073 / ATCC 700928 / UPEC) protein is D-alanine--D-alanine ligase A.